Consider the following 115-residue polypeptide: Large ribosomal subunit protein bL31B (115 aa).

It belongs to the bacterial ribosomal protein bL31 family. Type B subfamily. Part of the 50S ribosomal subunit.

The chain is Large ribosomal subunit protein bL31B from Polynucleobacter necessarius subsp. necessarius (strain STIR1).